The sequence spans 147 residues: D-aminoacyl-tRNA deacylase (147 aa).

A Gly-cisPro motif, important for rejection of L-amino acids motif is present at residues glycine 139 to proline 140.

This sequence belongs to the DTD family. As to quaternary structure, homodimer.

Its subcellular location is the cytoplasm. It catalyses the reaction glycyl-tRNA(Ala) + H2O = tRNA(Ala) + glycine + H(+). The catalysed reaction is a D-aminoacyl-tRNA + H2O = a tRNA + a D-alpha-amino acid + H(+). Functionally, an aminoacyl-tRNA editing enzyme that deacylates mischarged D-aminoacyl-tRNAs. Also deacylates mischarged glycyl-tRNA(Ala), protecting cells against glycine mischarging by AlaRS. Acts via tRNA-based rather than protein-based catalysis; rejects L-amino acids rather than detecting D-amino acids in the active site. By recycling D-aminoacyl-tRNA to D-amino acids and free tRNA molecules, this enzyme counteracts the toxicity associated with the formation of D-aminoacyl-tRNA entities in vivo and helps enforce protein L-homochirality. The protein is D-aminoacyl-tRNA deacylase of Rippkaea orientalis (strain PCC 8801 / RF-1) (Cyanothece sp. (strain PCC 8801)).